Reading from the N-terminus, the 329-residue chain is Myoblast determination protein 1 homolog (329 aa).

In terms of domain architecture, bHLH spans 160 to 211 (DRRKAATMRERRRLRKVNEAFEVVKQRTCPNPNQRLPKVEILRSAIDYINTL). Positions 256-279 (NPDGPNVYDDEDLSDTDEDRDHHH) are disordered. Over residues 263–273 (YDDEDLSDTDE) the composition is skewed to acidic residues.

In terms of assembly, efficient DNA binding requires dimerization with another bHLH protein. Body wall muscle cells; in clonal muscle precursors, in a set of early embryonic blastomeres (the ms-granddaughters), and in six glial-like cells called GLRS.

The protein localises to the nucleus. In terms of biological role, accumulation defines the body wall muscle cell fate during embryogenesis. This chain is Myoblast determination protein 1 homolog (hlh-1), found in Caenorhabditis briggsae.